The chain runs to 373 residues: Decapping nuclease RAI1 (373 aa).

Residue Glu136 participates in a divalent metal cation binding. 2 residues coordinate substrate: Cys168 and Glu185. A divalent metal cation contacts are provided by Asp187, Glu205, and Leu206. The substrate site is built by Lys207 and Gln231. Residues 340–373 (KDKPPGFEPSDAADAEPSMAEEPVPETASASGAY) form a disordered region.

It belongs to the DXO/Dom3Z family. In terms of assembly, interacts with RAT1; the interaction is direct, stabilizes RAT1 protein structure and stimulates its exoribonuclease activity. The interaction also stimulates RAI1 pyrophosphohydrolase activity, probably by recruiting it to mRNA substrates. A divalent metal cation serves as cofactor.

It localises to the nucleus. It catalyses the reaction a 5'-end NAD(+)-phospho-ribonucleoside in mRNA + H2O = a 5'-end phospho-ribonucleoside in mRNA + NAD(+) + H(+). It carries out the reaction a 5'-end (N(7)-methyl 5'-triphosphoguanosine)-ribonucleoside-ribonucleotide in mRNA + H2O = a (N(7)-methyl 5'-triphosphoguanosine)-nucleoside + a 5'-end phospho-ribonucleoside in mRNA + H(+). The enzyme catalyses a 5'-end triphospho-ribonucleoside in mRNA + H2O = a 5'-end phospho-ribonucleoside in mRNA + diphosphate + H(+). Functionally, decapping enzyme for NAD-capped RNAs: specifically hydrolyzes the nicotinamide adenine dinucleotide (NAD) cap from a subset of RNAs by removing the entire NAD moiety from the 5'-end of an NAD-capped RNA. The NAD-cap is present at the 5'-end of some RNAs and snoRNAs. In contrast to the canonical 5'-end N7 methylguanosine (m7G) cap, the NAD cap promotes mRNA decay. Also acts as a non-canonical decapping enzyme that removes the entire cap structure of m7G capped or incompletely capped RNAs. Has decapping activity toward incomplete 5'-end m7G cap mRNAs such as unmethylated 5'-end-capped RNA (cap0), while it has no activity toward 2'-O-ribose methylated m7G cap (cap1). Also possesses RNA 5'-pyrophosphohydrolase activity by hydrolyzing the 5'-end triphosphate to release pyrophosphates. Stimulates exoribonuclease activity of Rat1, allowing it to degrade RNAs with stable secondary structure more effectively. The polypeptide is Decapping nuclease RAI1 (RAI1) (Chaetomium globosum (strain ATCC 6205 / CBS 148.51 / DSM 1962 / NBRC 6347 / NRRL 1970) (Soil fungus)).